Here is a 953-residue protein sequence, read N- to C-terminus: Catenin alpha-2 (953 aa).

Position 632 is a phosphothreonine (Thr632). Phosphoserine is present on residues Ser640, Ser651, and Ser901. Basic and acidic residues predominate over residues 912–927 (EKKPLVKREKPEEFQT). The tract at residues 912–939 (EKKPLVKREKPEEFQTRVRRGSQKKHIS) is disordered. Over residues 928–938 (RVRRGSQKKHI) the composition is skewed to basic residues. Ser939 carries the post-translational modification Phosphoserine.

This sequence belongs to the vinculin/alpha-catenin family. In terms of assembly, interacts with CDH1 and CDH2. Interacts with ZNF639; recruits CTNNA2 to the nucleus. Interacts with F-actin. Expressed in neural tissues, with strongest expression in fetal and adult brain. Expressed in the developing cortical plate and marginal zone of 20-week-old human fetal brain.

The protein resides in the cell membrane. Its subcellular location is the cytoplasm. It is found in the cytoskeleton. It localises to the cell junction. The protein localises to the adherens junction. The protein resides in the cell projection. Its subcellular location is the axon. It is found in the nucleus. Its function is as follows. May function as a linker between cadherin adhesion receptors and the cytoskeleton to regulate cell-cell adhesion and differentiation in the nervous system. Required for proper regulation of cortical neuronal migration and neurite growth. It acts as a negative regulator of Arp2/3 complex activity and Arp2/3-mediated actin polymerization. It thereby suppresses excessive actin branching which would impair neurite growth and stability. Regulates morphological plasticity of synapses and cerebellar and hippocampal lamination during development. Functions in the control of startle modulation. In Homo sapiens (Human), this protein is Catenin alpha-2 (CTNNA2).